A 309-amino-acid chain; its full sequence is Elongation factor Ts (309 aa).

Residues 82–85 (TDFV) are involved in Mg(2+) ion dislocation from EF-Tu.

Belongs to the EF-Ts family.

The protein resides in the cytoplasm. Functionally, associates with the EF-Tu.GDP complex and induces the exchange of GDP to GTP. It remains bound to the aminoacyl-tRNA.EF-Tu.GTP complex up to the GTP hydrolysis stage on the ribosome. The chain is Elongation factor Ts from Rickettsia bellii (strain OSU 85-389).